The sequence spans 318 residues: Bis(5'-nucleosyl)-tetraphosphatase, symmetrical (318 aa).

Residues 269–318 are disordered; the sequence is PGREVTGPAPVARAPRRPRERLGRQRSRGNRGNAGNTAVPAKPQVDTPQD. A compositionally biased stretch (basic residues) spans 282-297; it reads APRRPRERLGRQRSRG.

The protein belongs to the Ap4A hydrolase family.

It carries out the reaction P(1),P(4)-bis(5'-adenosyl) tetraphosphate + H2O = 2 ADP + 2 H(+). Its function is as follows. Hydrolyzes diadenosine 5',5'''-P1,P4-tetraphosphate to yield ADP. In Xanthomonas oryzae pv. oryzae (strain KACC10331 / KXO85), this protein is Bis(5'-nucleosyl)-tetraphosphatase, symmetrical.